Here is a 396-residue protein sequence, read N- to C-terminus: S-adenosylmethionine synthase (396 aa).

Residue histidine 16 coordinates ATP. Aspartate 18 serves as a coordination point for Mg(2+). K(+) is bound at residue glutamate 44. Residues glutamate 57 and glutamine 100 each coordinate L-methionine. The interval 100-110 (QSPDIAQGVDR) is flexible loop. Residues 167–169 (DAK), 232–233 (RF), aspartate 241, 247–248 (RK), alanine 264, and lysine 268 contribute to the ATP site. Residue aspartate 241 participates in L-methionine binding. Lysine 272 is an L-methionine binding site.

Belongs to the AdoMet synthase family. Homotetramer; dimer of dimers. The cofactor is Mg(2+). It depends on K(+) as a cofactor.

Its subcellular location is the cytoplasm. The enzyme catalyses L-methionine + ATP + H2O = S-adenosyl-L-methionine + phosphate + diphosphate. Its pathway is amino-acid biosynthesis; S-adenosyl-L-methionine biosynthesis; S-adenosyl-L-methionine from L-methionine: step 1/1. In terms of biological role, catalyzes the formation of S-adenosylmethionine (AdoMet) from methionine and ATP. The overall synthetic reaction is composed of two sequential steps, AdoMet formation and the subsequent tripolyphosphate hydrolysis which occurs prior to release of AdoMet from the enzyme. The protein is S-adenosylmethionine synthase of Ralstonia nicotianae (strain ATCC BAA-1114 / GMI1000) (Ralstonia solanacearum).